Consider the following 323-residue polypeptide: Methenyltetrahydromethanopterin cyclohydrolase (323 aa).

Belongs to the MCH family.

It localises to the cytoplasm. The catalysed reaction is 5,10-methenyl-5,6,7,8-tetrahydromethanopterin + H2O = N(5)-formyl-5,6,7,8-tetrahydromethanopterin + H(+). It functions in the pathway one-carbon metabolism; methanogenesis from CO(2); 5,10-methenyl-5,6,7,8-tetrahydromethanopterin from CO(2): step 3/3. Functionally, catalyzes the reversible interconversion of 5-formyl-H(4)MPT to methenyl-H(4)MPT(+). The protein is Methenyltetrahydromethanopterin cyclohydrolase of Methanococcus vannielii (strain ATCC 35089 / DSM 1224 / JCM 13029 / OCM 148 / SB).